The following is a 101-amino-acid chain: Small ribosomal subunit protein uS14 (101 aa).

This sequence belongs to the universal ribosomal protein uS14 family. As to quaternary structure, part of the 30S ribosomal subunit. Contacts proteins S3 and S10.

In terms of biological role, binds 16S rRNA, required for the assembly of 30S particles and may also be responsible for determining the conformation of the 16S rRNA at the A site. The protein is Small ribosomal subunit protein uS14 of Janthinobacterium sp. (strain Marseille) (Minibacterium massiliensis).